We begin with the raw amino-acid sequence, 407 residues long: Arrestin red cell isoform 1 (407 aa).

The protein belongs to the arrestin family.

It localises to the cytoplasm. This is Arrestin red cell isoform 1 from Oncorhynchus mykiss (Rainbow trout).